An 83-amino-acid polypeptide reads, in one-letter code: Mu-theraphotoxin-Hhn2j 2 (83 aa).

Residues 1–21 form the signal peptide; the sequence is MKASMFLALAGLVLLFVVGYA. A propeptide spanning residues 22 to 48 is cleaved from the precursor; it reads SESEEKEFPIELLSKIFAVDVFKGEDR. Intrachain disulfides connect Cys-50–Cys-65, Cys-57–Cys-70, and Cys-64–Cys-77. Residue Leu-81 is modified to Leucine amide.

The protein belongs to the neurotoxin 10 (Hwtx-1) family. 15 (Hntx-3) subfamily. In terms of assembly, monomer. As to expression, expressed by the venom gland.

The protein localises to the secreted. Its function is as follows. Lethal neurotoxin. Selectively blocks tetrodotoxin-sensitive voltage-gated sodium channels (Nav). Does not affect tetrodotoxin-resistant voltage-gated sodium channels or calcium channels. The chain is Mu-theraphotoxin-Hhn2j 2 from Cyriopagopus hainanus (Chinese bird spider).